A 575-amino-acid chain; its full sequence is RecBCD enzyme subunit RecD (575 aa).

170 to 177 is a binding site for ATP; sequence GGPGTGKT.

It belongs to the RecD family. As to quaternary structure, heterotrimer of RecB, RecC and RecD. All subunits contribute to DNA-binding.

It catalyses the reaction Couples ATP hydrolysis with the unwinding of duplex DNA at the replication fork by translocating in the 5'-3' direction. This creates two antiparallel DNA single strands (ssDNA). The leading ssDNA polymer is the template for DNA polymerase III holoenzyme which synthesizes a continuous strand.. The enzyme catalyses ATP + H2O = ADP + phosphate + H(+). In terms of biological role, a helicase/nuclease that prepares dsDNA breaks (DSB) for recombinational DNA repair. Binds to DSBs and unwinds DNA via a highly rapid and processive ATP-dependent bidirectional helicase activity. Holoenzyme degrades any linearized DNA that is unable to undergo homologous recombination. In the holoenzyme this subunit has ssDNA-dependent ATPase and 5'-3' helicase activity. When added to pre-assembled RecBC greatly stimulates nuclease activity and augments holoenzyme processivity. Unlike the case in E.coli, suppresses RecA-dependent homologous recombination, is instead required for single-strand annealing pathway repair of DSB. A helicase/nuclease that prepares dsDNA breaks (DSB) for recombinational DNA repair. Binds to DSBs and unwinds DNA via a highly rapid and processive ATP-dependent bidirectional helicase activity. Unwinds dsDNA until it encounters a Chi (crossover hotspot instigator) sequence from the 3' direction. Cuts ssDNA a few nucleotides 3' to the Chi site. The properties and activities of the enzyme are changed at Chi. The Chi-altered holoenzyme produces a long 3'-ssDNA overhang and facilitates RecA-binding to the ssDNA for homologous DNA recombination and repair. Holoenzyme degrades any linearized DNA that is unable to undergo homologous recombination. In the holoenzyme this subunit has ssDNA-dependent ATPase and 5'-3' helicase activity. When added to pre-assembled RecBC greatly stimulates nuclease activity and augments holoenzyme processivity. Negatively regulates the RecA-loading ability of RecBCD. The protein is RecBCD enzyme subunit RecD of Mycobacterium tuberculosis (strain CDC 1551 / Oshkosh).